The primary structure comprises 257 residues: Ribosome-recycling factor, mitochondrial (257 aa).

This sequence belongs to the RRF family.

It localises to the mitochondrion. Functionally, necessary for protein synthesis in mitochondria. Functions as a ribosome recycling factor in mitochondria. The protein is Ribosome-recycling factor, mitochondrial (RRF1) of Debaryomyces hansenii (strain ATCC 36239 / CBS 767 / BCRC 21394 / JCM 1990 / NBRC 0083 / IGC 2968) (Yeast).